The sequence spans 145 residues: MPAPAATQTATLNKFIDGWKGWTPDGFLASWSDDCAQVTLPFSSGVPPRTRAITEKLFPKLMSILTNFQLTVHNVIHEPAESKAVIYAITTADSPFGPYKNEHACFVWFDESGESVNRIEEMFDGVFMKGFLPKLEAYIKGQEEA.

This sequence belongs to the avfA family.

The protein operates within secondary metabolite biosynthesis. Functionally, monooxygenase; part of the gene cluster that mediates the biosynthesis of the tetrahydroxanthone dimer secalonic acid D. The pathway begins with the synthesis of atrochrysone thioester by the polyketide synthase AacuL. The atrochrysone carboxyl ACP thioesterase AacuM then breaks the thioester bond and releases the atrochrysone carboxylic acid from AacuL. Atrochrysone carboxylic acid is decarboxylated by the decarboxylase AacuI, and oxidized by the anthrone oxygenase AacuG to yield emodin. Emodin is then reduced to emodin hydroquinone by a yet unidentified oxidoreductase. A-ring reduction by the short chain dehydrogenase AacuN, dehydration by the scytalone dehydratase-like protein AacuK and probable spontaneous re-oxidation, results in overall deoxygenation to chrysophanol. Baeyer-Villiger oxidation by the Baeyer-Villiger monooxygenase (BVMO) AacuH then yields monodictyphenone. Monodictyphenone is transformed into compounds with the tetrahydroxanthone skeleton via methylesterification by the methyltransferase AacuQ, followed by the action of the flavin-dependent monooxygenase AacuC, the isomerase AacuP, and the short chain dehydrogenase/reductase AacuF or AacuD. AacuF and AacuD should accept the same compound as a substrate but perform the ketoreduction with a different stereoselectivity, thus yielding blennolides B and A, respectively. In the final step of the biosynthesis, the cytochrome P450 monooxygenase AacuE accepts blennolide B and/or blennolide A to conduct the dimerization reaction to furnish the tetrahydroxanthone dimers, secalonic acids D, B, and F. This Aspergillus aculeatus (strain ATCC 16872 / CBS 172.66 / WB 5094) protein is Monooxygenase AacuP.